The sequence spans 146 residues: Snake venom vascular endothelial growth factor toxin (146 aa).

A signal peptide spans 1 to 24 (MAAYLLAVAILFCIQGWPLGTVQG). Glutamine 25 is subject to Pyrrolidone carboxylic acid. Intrachain disulfides connect cysteine 38–cysteine 80, cysteine 69–cysteine 115, and cysteine 73–cysteine 117. Residues 118-146 (RPRSASGVNSRKHKRNPEEGEQRAKFPFV) form a disordered region. Over residues 133 to 146 (NPEEGEQRAKFPFV) the composition is skewed to basic and acidic residues.

Belongs to the PDGF/VEGF growth factor family. Snake venom VEGF subfamily. As to quaternary structure, homodimer; disulfide-linked. Interacts with VEGF receptor-1 (FLT1) with a high affinity, whereas it binds to VEGF receptor-2 (KDR) with a low affinity. Does not bind VEGF receptor-3 (FLT4). As to expression, expressed by the venom gland.

The protein localises to the secreted. Functionally, snake venom VEGFs that may contribute to venom dispersion and prey subjugation by inducing vascular permeability and hypotension. This protein induces an increase in capillary permeability after intradermal injection, as well as a drastic hypotensive effect after intravenous injection. The hypotension is mediated by nitric oxide (NO), which is produced by VEGF-activated endothelium NO synthase. Also induces angiogenesis in vitro. Like other crotalid VEGFs, this protein interacts with VEGF receptor-1 (FLT1) with a high affinity, whereas it binds to VEGF receptor-2 (KDR) with a low affinity. This chain is Snake venom vascular endothelial growth factor toxin, found in Bothrops erythromelas (Caatinga lance head).